Consider the following 281-residue polypeptide: Bifunctional protein FolD (281 aa).

NADP(+) contacts are provided by residues 164–166 and serine 189; that span reads GRS.

It belongs to the tetrahydrofolate dehydrogenase/cyclohydrolase family. Homodimer.

The catalysed reaction is (6R)-5,10-methylene-5,6,7,8-tetrahydrofolate + NADP(+) = (6R)-5,10-methenyltetrahydrofolate + NADPH. It catalyses the reaction (6R)-5,10-methenyltetrahydrofolate + H2O = (6R)-10-formyltetrahydrofolate + H(+). It participates in one-carbon metabolism; tetrahydrofolate interconversion. Catalyzes the oxidation of 5,10-methylenetetrahydrofolate to 5,10-methenyltetrahydrofolate and then the hydrolysis of 5,10-methenyltetrahydrofolate to 10-formyltetrahydrofolate. The chain is Bifunctional protein FolD from Enterococcus faecalis (strain ATCC 700802 / V583).